Consider the following 508-residue polypeptide: 2,3-bisphosphoglycerate-independent phosphoglycerate mutase (508 aa).

Positions 13 and 63 each coordinate Mn(2+). Residue S63 is the Phosphoserine intermediate of the active site. Residues H122, 152-153 (RD), R184, R190, 256-259 (RADR), and K330 each bind substrate. Residues D397, H401, D438, H439, and H457 each contribute to the Mn(2+) site.

It belongs to the BPG-independent phosphoglycerate mutase family. In terms of assembly, monomer. It depends on Mn(2+) as a cofactor.

It carries out the reaction (2R)-2-phosphoglycerate = (2R)-3-phosphoglycerate. It participates in carbohydrate degradation; glycolysis; pyruvate from D-glyceraldehyde 3-phosphate: step 3/5. In terms of biological role, catalyzes the interconversion of 2-phosphoglycerate and 3-phosphoglycerate. The polypeptide is 2,3-bisphosphoglycerate-independent phosphoglycerate mutase (Laribacter hongkongensis (strain HLHK9)).